A 310-amino-acid chain; its full sequence is Putative S-adenosyl-L-methionine-dependent methyltransferase MUL_4763 (310 aa).

Residues Asp137 and 166–167 contribute to the S-adenosyl-L-methionine site; that span reads DL.

It belongs to the UPF0677 family.

Functionally, exhibits S-adenosyl-L-methionine-dependent methyltransferase activity. The protein is Putative S-adenosyl-L-methionine-dependent methyltransferase MUL_4763 of Mycobacterium ulcerans (strain Agy99).